Here is a 1118-residue protein sequence, read N- to C-terminus: MKKSVRPAVSRASGERGKPEVAGTTGTGKPVSKSSTAAPLSKVKSSDDLLAAMAGGNPTSSNAVAKTKRTASVGTTASTLDKPKTTSGTTSKRLTSSVTKETNLTRDRLRTSRASANKKQSAAGTVVGDAASGKRSRSQVLVESESRMSKSKSDGQISDKVALEAKVKDLLGLAKSKDVEILHLRSELRDMRVQLGLGGKELQEGPEEEEEEEEEEKPHVSAITAADVESTLILLQEQNQAIREELNLLKSENRMLKDRLNALGFSLEQRLDGSDKLFSYASLSPDLAAGSGQSDGGGTGTLTSSVEGSAPGSLEDLLAGHQHGGSADNLDSESSEVYQAVTSSDDALDAPSGASSSSESECAPSRERSRRGSSGNASEVSVACLTERIHQMEENQHSTAEELQATLQELADLQQITQELNGENERLGEEKVILMDSLCQQSDKLELYGRQIEYLRSLLDEHHVSYVLEEDIKSGRYMELEQRYADLAENARFEREQLLGVQQHLSNTLKMAEQDNAEAQEMIGALKERNHQMERIMESERQGRAAVEAALHEYKDAVSSEQAELSRCRAQLDQERQRVAELYSLHTAGDKNDICQLLEGVRLGKEEAEAKAAKLQEGLEQAHSDLGHLQETFSKLDREYREFREQAQRQLSEQERALEKQRMDLQEKETEIADMKETIFELEDEVEQHRALKLHDNLIITDLENSVKKLQDQKHDMEREIKILHRRLREESMEWRQFQADLQTAVVIANDIKSEAQEEIGDLRRRLQEAQEKNEKLSKELEEVKSRKQDEERGRVYNYMNAVERDLAALRQGMGLSRRSSTSSEPSPTVKTLIKSFDSASQGPPSNGASVTPTVSAAPLPRTPLSPSPMKTPPAAAVSPIQRHSISGSMSAAKPLSSLGDKRPTYTDITIPTEHLLRGSAASRPPSALQRVSNMDSTKTISVSRRSSEEMKRDMSASEGASSTSLMAMSAASAPLSLSSSSPTASVTPTTRSRLREERKDPLSALAREYGGSKRNALLKWCQKKTEGYQNIDITNFSSSWNDGLAFCAVLHTYLPAHIPYQELTSQEKRRNFTLAFQAAESVGIKCTLDINDMVHTERPDWQSVMTYVTAIYKYFET.

2 disordered regions span residues 1–157 (MKKS…DGQI) and 198–221 (GGKE…PHVS). Polar residues-rich tracts occupy residues 57–102 (NPTS…TKET) and 112–123 (SRASANKKQSAA). The segment covering 144 to 153 (SESRMSKSKS) has biased composition (basic and acidic residues). Acidic residues predominate over residues 204 to 215 (EGPEEEEEEEEE). The stretch at 225–264 (AADVESTLILLQEQNQAIREELNLLKSENRMLKDRLNALG) forms a coiled coil. The segment at 289 to 379 (AGSGQSDGGG…RRGSSGNASE (91 aa)) is disordered. The span at 343–363 (SSDDALDAPSGASSSSESECA) shows a compositional bias: low complexity. Coiled coils occupy residues 384–438 (CLTE…MDSL) and 475–796 (GRYM…RGRV). Disordered regions lie at residues 771 to 790 (QEKN…RKQD), 837 to 876 (FDSA…PPAA), and 920 to 1001 (SAAS…ERKD). A compositionally biased stretch (polar residues) spans 838–855 (DSASQGPPSNGASVTPTV). Over residues 861–872 (PRTPLSPSPMKT) the composition is skewed to pro residues. The segment covering 930–945 (QRVSNMDSTKTISVSR) has biased composition (polar residues). Residues 946–956 (RSSEEMKRDMS) show a composition bias toward basic and acidic residues. The span at 961–986 (ASSTSLMAMSAASAPLSLSSSSPTAS) shows a compositional bias: low complexity. The 106-residue stretch at 1012–1117 (GSKRNALLKW…YVTAIYKYFE (106 aa)) folds into the Calponin-homology (CH) domain.

This sequence belongs to the cytospin-A family. In terms of assembly, may interact with both microtubules and actin cytoskeleton.

Its subcellular location is the cytoplasm. It localises to the cytoskeleton. It is found in the spindle. The protein resides in the cell junction. The protein localises to the gap junction. Its function is as follows. Involved in cytokinesis and spindle organization. May play a role in actin cytoskeleton organization and microtubule stabilization and hence required for proper cell adhesion and migration. In Takifugu rubripes (Japanese pufferfish), this protein is Cytospin-A (specc1l).